Consider the following 223-residue polypeptide: Deoxyribose-phosphate aldolase (223 aa).

D89 (proton donor/acceptor) is an active-site residue. K152 acts as the Schiff-base intermediate with acetaldehyde in catalysis. Residue K181 is the Proton donor/acceptor of the active site.

It belongs to the DeoC/FbaB aldolase family. DeoC type 1 subfamily.

It localises to the cytoplasm. The enzyme catalyses 2-deoxy-D-ribose 5-phosphate = D-glyceraldehyde 3-phosphate + acetaldehyde. It participates in carbohydrate degradation; 2-deoxy-D-ribose 1-phosphate degradation; D-glyceraldehyde 3-phosphate and acetaldehyde from 2-deoxy-alpha-D-ribose 1-phosphate: step 2/2. In terms of biological role, catalyzes a reversible aldol reaction between acetaldehyde and D-glyceraldehyde 3-phosphate to generate 2-deoxy-D-ribose 5-phosphate. This is Deoxyribose-phosphate aldolase from Bacillus subtilis (strain 168).